The primary structure comprises 638 residues: Paramyosin (638 aa).

Residues 1 to 638 (FSPSTTRLES…EGDISVMQAD (638 aa)) are a coiled coil.

This sequence belongs to the paramyosin family. Homodimer.

It localises to the cytoplasm. The protein resides in the myofibril. In terms of biological role, paramyosin is a major structural component of many thick filaments isolated from invertebrate muscles. The polypeptide is Paramyosin (Opisthorchis felineus).